Reading from the N-terminus, the 266-residue chain is Early E1A protein (266 aa).

The tract at residues 39–47 (PSLYELYDL) is interaction with RB1 in competition with E2F1. The segment at 75–145 (EGLFLPEPPV…AAAAADRERE (71 aa)) is interaction with UBE2I. Residues 98-102 (PQLHP) carry the PXLXP motif, interaction with host ZMYND11 motif. Positions 107–111 (LLCYE) match the LXCXE motif, interaction with host RB1 and TMEM173/STING motif. A zinc finger spans residues 159–179 (CKSCEHHRNSTGNTDLMCSLC). Positions 195–226 (NEPEPNSTLDGDERPSPPKLGSAVPEGVIKPV) are disordered. Positions 255–259 (PVDLS) match the PXDLS motif, CTBP-binding motif. The Nuclear localization signal signature appears at 261 to 265 (KRPRC).

It belongs to the adenoviridae E1A protein family. As to quaternary structure, interacts with host UBE2I; this interaction interferes with polySUMOylation. Interacts with host RB1; this interaction induces the aberrant dissociation of RB1-E2F1 complex thereby disrupting the activity of RB1 and activating E2F1-regulated genes. Interacts with host ATF7; the interaction enhances ATF7-mediated viral transactivation activity which requires the zinc binding domains of both proteins. Isoform early E1A 32 kDa protein and isoform early E1A 26 kDa protein interact (via N-terminus) with CUL1 and E3 ubiquitin ligase RBX1; these interactions inhibit RBX1-CUL1-dependent elongation reaction of ubiquitin chains and attenuate ubiquitination of SCF(FBXW7) target proteins. Interacts (via PXLXP motif) with host ZMYND11/BS69 (via MYND-type zinc finger); this interaction inhibits E1A mediated transactivation. Interacts with host EP300; this interaction stimulates the acetylation of RB1 by recruiting EP300 and RB1 into a multimeric-protein complex. Interacts with host CTBP1 and CTBP2; this interaction seems to potentiate viral replication. Interacts with host DCAF7. Interacts with host DYRK1A. Interacts with host KPNA4; this interaction allows E1A import into the host nucleus. Interacts with host EP400; this interaction stabilizes MYC. Interacts with host TBP protein; this interaction probably disrupts the TBP-TATA complex. Interacts (via LXCXE motif) with host TMEM173/STING; this interaction impairs the ability of TMEM173/STING to sense cytosolic DNA and promote the production of type I interferon (IFN-alpha and IFN-beta). Interacts (via C-terminus) with host ZBED1/hDREF (via C-terminus); the interaction is direct.

It is found in the host nucleus. In terms of biological role, plays a role in viral genome replication by driving entry of quiescent cells into the cell cycle. Stimulation of progression from G1 to S phase allows the virus to efficiently use the cellular DNA replicating machinery to achieve viral genome replication. E1A protein has both transforming and trans-activating activities. Induces the disassembly of the E2F1 transcription factor from RB1 by direct competition for the same binding site on RB1, with subsequent transcriptional activation of E2F1-regulated S-phase genes and of the E2 region of the adenoviral genome. Release of E2F1 leads to the ARF-mediated inhibition of MDM2 and causes TP53/p53 to accumulate because it is not targeted for degradation by MDM2-mediated ubiquitination anymore. This increase in TP53, in turn, would arrest the cell proliferation and direct its death but this effect is counteracted by the viral protein E1B-55K. Inactivation of the ability of RB1 to arrest the cell cycle is critical for cellular transformation, uncontrolled cellular growth and proliferation induced by viral infection. Interaction with RBX1 and CUL1 inhibits ubiquitination of the proteins targeted by SCF(FBXW7) ubiquitin ligase complex, and may be linked to unregulated host cell proliferation. The tumorigenesis-restraining activity of E1A may be related to the disruption of the host CtBP-CtIP complex through the CtBP binding motif. Interaction with host TMEM173/STING impairs the ability of TMEM173/STING to sense cytosolic DNA and promote the production of type I interferon (IFN-alpha and IFN-beta). Promotes the sumoylation of host ZBED1/hDREF with SUMO1. This Homo sapiens (Human) protein is Early E1A protein.